Reading from the N-terminus, the 90-residue chain is Probable Fe(2+)-trafficking protein (90 aa).

The protein belongs to the Fe(2+)-trafficking protein family.

In terms of biological role, could be a mediator in iron transactions between iron acquisition and iron-requiring processes, such as synthesis and/or repair of Fe-S clusters in biosynthetic enzymes. The sequence is that of Probable Fe(2+)-trafficking protein from Hydrogenovibrio crunogenus (strain DSM 25203 / XCL-2) (Thiomicrospira crunogena).